A 260-amino-acid polypeptide reads, in one-letter code: MPIIYSLVARGSSVLAEFTSTNGNFVTITRRILDLIPPNDTKMSYVYEKYIFHYLVSDTLTYLCMADEEFGRRIPFTFLDDVKNRFKSMYGDKGKTAIAYGMNSDFSRTLENLMDHYSNTTRVDTMSRTMAEIDEVKNILVSDIAPQLLKRGEKIEMLVERTDTLNQQSFKFKKQSKQLKCAMWWKNVKLMLVLGAIVLIIIFIIVMSYCDGFRSGSKCRSSPSSNSTPTPTPTETPTPTPTPTSTPTPSQLLETLLNQF.

Over 1–189 the chain is Cytoplasmic; the sequence is MPIIYSLVAR…KCAMWWKNVK (189 aa). The 104-residue stretch at 7-110 folds into the Longin domain; sequence LVARGSSVLA…GMNSDFSRTL (104 aa). In terms of domain architecture, v-SNARE coiled-coil homology spans 125–186; it reads TMSRTMAEID…KQLKCAMWWK (62 aa). The helical; Anchor for type IV membrane protein transmembrane segment at 190 to 210 threads the bilayer; the sequence is LMLVLGAIVLIIIFIIVMSYC. The Vesicular segment spans residues 211 to 260; the sequence is DGFRSGSKCRSSPSSNSTPTPTPTETPTPTPTPTSTPTPSQLLETLLNQF. The disordered stretch occupies residues 215–250; the sequence is SGSKCRSSPSSNSTPTPTPTETPTPTPTPTSTPTPS. The segment covering 230 to 246 has biased composition (pro residues); it reads TPTPTETPTPTPTPTST.

It belongs to the synaptobrevin family.

It is found in the cytoplasmic vesicle. It localises to the secretory vesicle membrane. The protein resides in the golgi apparatus. The protein localises to the trans-Golgi network membrane. Its subcellular location is the late endosome membrane. It is found in the lysosome membrane. It localises to the endoplasmic reticulum membrane. The protein resides in the phagosome membrane. Involved in the targeting and/or fusion of transport vesicles to their target membrane during transport of proteins from the early endosome to the lysosome. Required for heterotypic fusion of late endosomes with lysosomes and homotypic lysosomal fusion. In Dictyostelium discoideum (Social amoeba), this protein is Vesicle-associated membrane protein 7B.